A 216-amino-acid chain; its full sequence is MQLPFPVAQDPDQHSLEKGRLLFAGDTEFVKGVVAMSGLPDPDRLEVCFAGRSNVGKSSLINALTGRKGLARASNTPGRTQEINFFTAGESHYLVDLPGYGYANAPVPVVEKWQRLLKQYLSGRQTLRRAFVLIDARHGVKKVDEEILSLLDSAAVTFQVVLTKADKVKEKEREKVLDQVRTALSKHPAAFPELVITSSEKGWGIPTLRSIITDLT.

Residues 43-216 (DRLEVCFAGR…TLRSIITDLT (174 aa)) enclose the EngB-type G domain. GTP is bound by residues 51–58 (GRSNVGKS), 78–82 (GRTQE), 96–99 (DLPG), 163–166 (TKAD), and 197–199 (TSS). Mg(2+) contacts are provided by serine 58 and threonine 80.

It belongs to the TRAFAC class TrmE-Era-EngA-EngB-Septin-like GTPase superfamily. EngB GTPase family. The cofactor is Mg(2+).

Its function is as follows. Necessary for normal cell division and for the maintenance of normal septation. This Roseobacter denitrificans (strain ATCC 33942 / OCh 114) (Erythrobacter sp. (strain OCh 114)) protein is Probable GTP-binding protein EngB.